Reading from the N-terminus, the 398-residue chain is MKIDPVELTKKLISFKSITPKDDGAIEHIAAILKKSGFECEILEFGDKVKNLYAKYINGVPNLCFAGHVDVVPPGELKDWISDPFKPEIRDGMLYGRGAADMKSGIAAFIAAIVDSVAGKFRFSGSISALITSAEESTEEHGTKAVLEWMKSKQKKIDFCIVGEPTSSEKLGDTIKIGRRGSATFKLICHGKQGHVAYPELADNPIYKMISILSKIKDTTFDTGNKYFQPSHCEITTIDVGNNTNNLIPSSIAAGFNIRYNNIQTLDGLYKLIDEICSSVTNDYKLSMQSSRNVFLSIPDRNTDIMLDAINKITGIDAVLSTNGGTSDAAFIKDICPVIEFGMINKTAHQVNECVSIDDIHKLTAIYKEFIKNYFYPTNKILNQINVIGNTPDGPLLA.

H68 is a binding site for Zn(2+). Residue D70 is part of the active site. D101 is a binding site for Zn(2+). The active-site Proton acceptor is E135. The Zn(2+) site is built by E136, E164, and H349.

This sequence belongs to the peptidase M20A family. DapE subfamily. Homodimer. Requires Zn(2+) as cofactor. Co(2+) is required as a cofactor.

It carries out the reaction N-succinyl-(2S,6S)-2,6-diaminopimelate + H2O = (2S,6S)-2,6-diaminopimelate + succinate. It participates in amino-acid biosynthesis; L-lysine biosynthesis via DAP pathway; LL-2,6-diaminopimelate from (S)-tetrahydrodipicolinate (succinylase route): step 3/3. Catalyzes the hydrolysis of N-succinyl-L,L-diaminopimelic acid (SDAP), forming succinate and LL-2,6-diaminopimelate (DAP), an intermediate involved in the bacterial biosynthesis of lysine and meso-diaminopimelic acid, an essential component of bacterial cell walls. This is Succinyl-diaminopimelate desuccinylase from Wolbachia pipientis subsp. Culex pipiens (strain wPip).